Reading from the N-terminus, the 210-residue chain is Cytochrome c oxidase subunit 2 (210 aa).

The Mitochondrial intermembrane portion of the chain corresponds to Met1–Leu20. Residues Ser21–Ser42 form a helical membrane-spanning segment. Over Lys43–Asp60 the chain is Mitochondrial matrix. A helical transmembrane segment spans residues Val61–His86. Over Leu87–Ile210 the chain is Mitochondrial intermembrane. The Cu cation site is built by His157, Cys192, Glu194, Cys196, His200, and Met203. Mg(2+) is bound at residue Glu194.

The protein belongs to the cytochrome c oxidase subunit 2 family. In terms of assembly, component of the cytochrome c oxidase (complex IV, CIV), a multisubunit enzyme composed of a catalytic core of 3 subunits and several supernumerary subunits. The complex exists as a monomer or a dimer and forms supercomplexes (SCs) in the inner mitochondrial membrane with ubiquinol-cytochrome c oxidoreductase (cytochrome b-c1 complex, complex III, CIII). Requires Cu cation as cofactor.

Its subcellular location is the mitochondrion inner membrane. It catalyses the reaction 4 Fe(II)-[cytochrome c] + O2 + 8 H(+)(in) = 4 Fe(III)-[cytochrome c] + 2 H2O + 4 H(+)(out). Its function is as follows. Component of the cytochrome c oxidase, the last enzyme in the mitochondrial electron transport chain which drives oxidative phosphorylation. The respiratory chain contains 3 multisubunit complexes succinate dehydrogenase (complex II, CII), ubiquinol-cytochrome c oxidoreductase (cytochrome b-c1 complex, complex III, CIII) and cytochrome c oxidase (complex IV, CIV), that cooperate to transfer electrons derived from NADH and succinate to molecular oxygen, creating an electrochemical gradient over the inner membrane that drives transmembrane transport and the ATP synthase. Cytochrome c oxidase is the component of the respiratory chain that catalyzes the reduction of oxygen to water. Electrons originating from reduced cytochrome c in the intermembrane space (IMS) are transferred via the dinuclear copper A center (CU(A)) of subunit 2 and heme A of subunit 1 to the active site in subunit 1, a binuclear center (BNC) formed by heme A3 and copper B (CU(B)). The BNC reduces molecular oxygen to 2 water molecules using 4 electrons from cytochrome c in the IMS and 4 protons from the mitochondrial matrix. This is Cytochrome c oxidase subunit 2 from Leishmania tarentolae (Sauroleishmania tarentolae).